Here is a 449-residue protein sequence, read N- to C-terminus: GTPase Der (449 aa).

EngA-type G domains follow at residues 4–174 (PIVA…PPKT) and 183–358 (LRIA…VQRQ). GTP-binding positions include 10–17 (GRPNVGKS), 57–61 (DTAGV), 126–129 (NKCD), 189–196 (GRPNVGKS), 236–240 (DTAGI), and 301–304 (NKWD). One can recognise a KH-like domain in the interval 359-444 (KRVPTSELNN…PIVIVFRSRE (86 aa)).

It belongs to the TRAFAC class TrmE-Era-EngA-EngB-Septin-like GTPase superfamily. EngA (Der) GTPase family. In terms of assembly, associates with the 50S ribosomal subunit.

In terms of biological role, GTPase that plays an essential role in the late steps of ribosome biogenesis. The polypeptide is GTPase Der (Chloroflexus aurantiacus (strain ATCC 29366 / DSM 635 / J-10-fl)).